A 1022-amino-acid chain; its full sequence is Mismatch repair endonuclease pms1 (1022 aa).

3 disordered regions span residues Thr251–Ser282, Phe390–Asp527, and Lys622–Tyr676. Polar residues predominate over residues Lys403–Asn412. 2 stretches are compositionally biased toward low complexity: residues Thr436 to Asn469 and Gln647 to Gln664.

The protein belongs to the DNA mismatch repair MutL/HexB family. As to quaternary structure, heterodimer of pms1 and mlh1 (MutL alpha). Forms a ternary complex with MutS alpha (msh2-msh6) or MutS beta (msh2-msh3).

The protein localises to the nucleus. In terms of biological role, component of the post-replicative DNA mismatch repair system (MMR). Heterodimerizes with mlh1 to form MutL alpha. DNA repair is initiated by MutS alpha (msh2-msh6) or MutS beta (msh2-msh3) binding to a dsDNA mismatch, then MutL alpha is recruited to the heteroduplex. Assembly of the MutL-MutS-heteroduplex ternary complex in presence of rfc and pcna is sufficient to activate endonuclease activity of pms1. It introduces single-strand breaks near the mismatch and thus generates new entry points for the exonuclease exo1 to degrade the strand containing the mismatch. The protein is Mismatch repair endonuclease pms1 (pms1) of Dictyostelium discoideum (Social amoeba).